The sequence spans 29 residues: Alpha-amylase inhibitor 2 (29 aa).

The protein belongs to the protease inhibitor I6 (cereal trypsin/alpha-amylase inhibitor) family.

Its subcellular location is the secreted. Its function is as follows. Alpha-amylase inhibitor. The sequence is that of Alpha-amylase inhibitor 2 from Saussurea costus (Costus).